We begin with the raw amino-acid sequence, 288 residues long: Cyclin-dependent kinase 2 homolog (288 aa).

A Protein kinase domain is found at 4 to 284 (YHGLEKIGEG…AKQAIEHPYF (281 aa)). ATP contacts are provided by residues 10–18 (IGEGTYGVV) and lysine 32. A Phosphothreonine modification is found at threonine 14. A Phosphotyrosine modification is found at tyrosine 15. The Proton acceptor role is filled by aspartate 125. Threonine 158 bears the Phosphothreonine mark.

This sequence belongs to the protein kinase superfamily. CMGC Ser/Thr protein kinase family. CDC2/CDKX subfamily. As to quaternary structure, may form a complex composed of at least the catalytic subunit CRK2 and a cyclin. It depends on Mg(2+) as a cofactor.

It localises to the cytoplasm. The catalysed reaction is L-seryl-[protein] + ATP = O-phospho-L-seryl-[protein] + ADP + H(+). The enzyme catalyses L-threonyl-[protein] + ATP = O-phospho-L-threonyl-[protein] + ADP + H(+). It carries out the reaction [DNA-directed RNA polymerase] + ATP = phospho-[DNA-directed RNA polymerase] + ADP + H(+). With respect to regulation, phosphorylation at Thr-14 or Tyr-15 inactivates the enzyme, while phosphorylation at Thr-158 activates it. In terms of biological role, serine/threonine-protein kinase. Involved in the control of the cell cycle. Required for entry into S-phase and mitosis. Probable component of the kinase complex that phosphorylates the repetitive C-terminus of RNA polymerase II. The polypeptide is Cyclin-dependent kinase 2 homolog (Plasmodium chabaudi chabaudi).